Reading from the N-terminus, the 235-residue chain is Leucyl/phenylalanyl-tRNA--protein transferase (235 aa).

It belongs to the L/F-transferase family.

The protein localises to the cytoplasm. It carries out the reaction N-terminal L-lysyl-[protein] + L-leucyl-tRNA(Leu) = N-terminal L-leucyl-L-lysyl-[protein] + tRNA(Leu) + H(+). The catalysed reaction is N-terminal L-arginyl-[protein] + L-leucyl-tRNA(Leu) = N-terminal L-leucyl-L-arginyl-[protein] + tRNA(Leu) + H(+). The enzyme catalyses L-phenylalanyl-tRNA(Phe) + an N-terminal L-alpha-aminoacyl-[protein] = an N-terminal L-phenylalanyl-L-alpha-aminoacyl-[protein] + tRNA(Phe). Functions in the N-end rule pathway of protein degradation where it conjugates Leu, Phe and, less efficiently, Met from aminoacyl-tRNAs to the N-termini of proteins containing an N-terminal arginine or lysine. The protein is Leucyl/phenylalanyl-tRNA--protein transferase of Shewanella frigidimarina (strain NCIMB 400).